A 230-amino-acid polypeptide reads, in one-letter code: Fibrillarin-like rRNA/tRNA 2'-O-methyltransferase (230 aa).

S-adenosyl-L-methionine contacts are provided by residues 87–88, 105–106, 130–131, and 150–153; these read TT, EF, DA, and DVAQ.

Belongs to the methyltransferase superfamily. Fibrillarin family. In terms of assembly, interacts with nop5. Component of box C/D small ribonucleoprotein (sRNP) particles that contain rpl7ae, FlpA and nop5, plus a guide RNA.

Its function is as follows. Involved in pre-rRNA and tRNA processing. Utilizes the methyl donor S-adenosyl-L-methionine to catalyze the site-specific 2'-hydroxyl methylation of ribose moieties in rRNA and tRNA. Site specificity is provided by a guide RNA that base pairs with the substrate. Methylation occurs at a characteristic distance from the sequence involved in base pairing with the guide RNA. This is Fibrillarin-like rRNA/tRNA 2'-O-methyltransferase from Methanococcus maripaludis (strain C5 / ATCC BAA-1333).